The chain runs to 555 residues: CTP synthase (555 aa).

Residues 1–265 (MTRYIFITGG…GNRVCEKLNI (265 aa)) are amidoligase domain. Residue Ser-13 coordinates CTP. Ser-13 serves as a coordination point for UTP. Residues 14-19 (SLGKGI) and Asp-71 contribute to the ATP site. Asp-71 and Glu-139 together coordinate Mg(2+). CTP-binding positions include 146-148 (DIE), 186-191 (KTKPTQ), and Lys-222. Residues 186 to 191 (KTKPTQ) and Lys-222 contribute to the UTP site. The region spanning 290 to 541 (TVAVVGKYVD…IKAGLAAKEA (252 aa)) is the Glutamine amidotransferase type-1 domain. Gly-351 contacts L-glutamine. Cys-378 acts as the Nucleophile; for glutamine hydrolysis in catalysis. Residues 379-382 (LGMQ), Glu-402, and Arg-469 each bind L-glutamine. Catalysis depends on residues His-514 and Glu-516.

It belongs to the CTP synthase family. In terms of assembly, homotetramer.

The catalysed reaction is UTP + L-glutamine + ATP + H2O = CTP + L-glutamate + ADP + phosphate + 2 H(+). It carries out the reaction L-glutamine + H2O = L-glutamate + NH4(+). It catalyses the reaction UTP + NH4(+) + ATP = CTP + ADP + phosphate + 2 H(+). The protein operates within pyrimidine metabolism; CTP biosynthesis via de novo pathway; CTP from UDP: step 2/2. Allosterically activated by GTP, when glutamine is the substrate; GTP has no effect on the reaction when ammonia is the substrate. The allosteric effector GTP functions by stabilizing the protein conformation that binds the tetrahedral intermediate(s) formed during glutamine hydrolysis. Inhibited by the product CTP, via allosteric rather than competitive inhibition. Functionally, catalyzes the ATP-dependent amination of UTP to CTP with either L-glutamine or ammonia as the source of nitrogen. Regulates intracellular CTP levels through interactions with the four ribonucleotide triphosphates. The chain is CTP synthase from Coxiella burnetii (strain RSA 493 / Nine Mile phase I).